A 381-amino-acid chain; its full sequence is GDP-mannose transporter (381 aa).

The Cytoplasmic portion of the chain corresponds to Met-1 to Gln-40. The chain crosses the membrane as a helical span at residues Leu-41–Val-61. The Lumenal segment spans residues Met-62–Asp-71. Residues Phe-72–Thr-92 form a helical membrane-spanning segment. Topologically, residues Cys-93–Lys-110 are cytoplasmic. A helical membrane pass occupies residues Lys-111–Ser-127. The Lumenal segment spans residues Lys-128–Ser-134. Residues Ile-135–Tyr-151 traverse the membrane as a helical segment. The Cytoplasmic segment spans residues Gly-152–Ser-160. Residues Val-161 to Ala-182 traverse the membrane as a helical segment. Residues Asp-183–Thr-200 are Lumenal-facing. Residues Leu-201–Gly-221 form a helical membrane-spanning segment. The Cytoplasmic segment spans residues Met-222–Asp-233. The chain crosses the membrane as a helical span at residues Phe-234–Leu-254. At Met-255–Gly-274 the chain is on the lumenal side. N-linked (GlcNAc...) asparagine glycosylation is present at Asn-262. A helical transmembrane segment spans residues Ile-275–Trp-295. The Cytoplasmic portion of the chain corresponds to Cys-296–Thr-303. Residues Thr-304–Phe-324 form a helical membrane-spanning segment. Over Asp-325–Pro-327 the chain is Lumenal. Residues Val-328–Val-348 form a helical membrane-spanning segment. The Cytoplasmic segment spans residues Ala-349–Ser-381. A disordered region spans residues Leu-362 to Ser-381.

It belongs to the TPT transporter family. SLC35D subfamily. In terms of assembly, homooligomer.

Its subcellular location is the golgi apparatus membrane. It is found in the cytoplasmic vesicle membrane. The protein resides in the endoplasmic reticulum membrane. In terms of biological role, involved in the import of GDP-mannose from the cytoplasm into the Golgi lumen. This is GDP-mannose transporter (gmt1) from Aspergillus clavatus (strain ATCC 1007 / CBS 513.65 / DSM 816 / NCTC 3887 / NRRL 1 / QM 1276 / 107).